We begin with the raw amino-acid sequence, 446 residues long: C4-dicarboxylate transport protein (446 aa).

9 helical membrane-spanning segments follow: residues 20 to 40, 56 to 76, 91 to 111, 160 to 180, 200 to 220, 233 to 253, 319 to 339, 344 to 364, and 367 to 387; these read HLYV…HFYP, LVKM…IAGM, IYFL…ANVV, GDIL…AGVG, LVHI…AFTI, FLIL…LGLV, IYMT…LSLG, LLLV…AGFI, and AATL…ILGI.

It belongs to the dicarboxylate/amino acid:cation symporter (DAACS) (TC 2.A.23) family.

The protein localises to the cell inner membrane. In terms of biological role, responsible for the transport of dicarboxylates such as succinate, fumarate, and malate from the periplasm across the membrane. In Azorhizobium caulinodans (strain ATCC 43989 / DSM 5975 / JCM 20966 / LMG 6465 / NBRC 14845 / NCIMB 13405 / ORS 571), this protein is C4-dicarboxylate transport protein.